The primary structure comprises 629 residues: Polyadenylate-binding protein, cytoplasmic and nuclear (629 aa).

Positions 1-11 are enriched in polar residues; it reads MSAAETNQLQE. The disordered stretch occupies residues 1–48; it reads MSAAETNQLQESMEKLNIGSTTEEQSAAAATTTADQSAEEQGESSGVA. Residues 20–36 are compositionally biased toward low complexity; it reads STTEEQSAAAATTTADQ. RRM domains follow at residues 52–130, 140–217, 233–310, and 336–413; these read ASLY…WSQR, GNIF…KHIS, TNIY…RAQK, and VNLF…LAQR. Positions 503 to 534 are disordered; sequence PPQFQQDFNGQNMRPQQQQQQQPRGGYYPNRN. Positions 505–517 are enriched in polar residues; the sequence is QFQQDFNGQNMRP. Positions 537-618 constitute a PABC domain; it reads SKRDLAAIIS…ALTAFEEYKK (82 aa).

It belongs to the polyadenylate-binding protein type-1 family.

Its subcellular location is the cytoplasm. It localises to the nucleus. Functionally, binds the poly(A) tail of mRNA. Appears to be an important mediator of the multiple roles of the poly(A) tail in mRNA biogenesis, stability and translation. In the nucleus, involved in both mRNA cleavage and polyadenylation. Is also required for efficient mRNA export to the cytoplasm. Acts in concert with a poly(A)-specific nuclease (PAN) to affect poly(A) tail shortening, which may occur concomitantly with either nucleocytoplasmic mRNA transport or translational initiation. In the cytoplasm, stimulates translation initiation and regulates mRNA decay through translation termination-coupled poly(A) shortening, probably mediated by PAN. The chain is Polyadenylate-binding protein, cytoplasmic and nuclear (PAB1) from Candida albicans (strain SC5314 / ATCC MYA-2876) (Yeast).